Consider the following 349-residue polypeptide: Glycosyltransferase 8 domain-containing protein 2 (349 aa).

Over M1 to K6 the chain is Cytoplasmic. The chain crosses the membrane as a helical; Signal-anchor for type II membrane protein span at residues I7–Y24. The Lumenal portion of the chain corresponds to K25–S349. N234 is a glycosylation site (N-linked (GlcNAc...) asparagine).

It belongs to the glycosyltransferase 8 family.

The protein localises to the membrane. The chain is Glycosyltransferase 8 domain-containing protein 2 (GLT8D2) from Macaca fascicularis (Crab-eating macaque).